The sequence spans 452 residues: mRNA export factor ICP27 homolog (452 aa).

Residues 42-164 (EAIGSTPGED…RNDQTHDESY (123 aa)) are disordered. A compositionally biased stretch (basic and acidic residues) spans 98 to 107 (SNHHGGRDVE). A compositionally biased stretch (basic residues) spans 129 to 144 (SRKHRDRSLSNRRRRP). Over residues 154-164 (ERNDQTHDESY) the composition is skewed to basic and acidic residues. Positions 335, 417, 421, and 426 each coordinate Zn(2+). The segment at 335-426 (CLLLNRDNDL…HQRECGRVEC (92 aa)) adopts a CHC2-type zinc-finger fold.

Belongs to the HHV-1 ICP27 protein family. Homodimer. Homodimerization is required for transactivation. Associates in a complex with RNA, and host export factors NXF1/TAP and ALYREF; these interactions allow nuclear export of viral transcripts. Interacts with three host shuttling SR proteins SRSF1, SRSF3 and SRSF7. Interacts with host SRPK1. Interacts with IE62; this interaction enhances IE62 transactivation. In terms of processing, phosphorylated in vitro by SRPK1.

It localises to the host cytoplasm. It is found in the host nucleus. Its function is as follows. Multifunctional regulator of the expression of viral genes that mediates nuclear export of viral intronless mRNAs. This immediate early (EI) protein promotes the nuclear export of viral intronless mRNAs by interacting with mRNAs and host NXF1/TAP. This is mRNA export factor ICP27 homolog from Varicella-zoster virus (strain Dumas) (HHV-3).